The sequence spans 282 residues: Phosphate import ATP-binding protein PstB (282 aa).

Positions 1–10 (MNMAESHLDP) are enriched in basic and acidic residues. Positions 1–24 (MNMAESHLDPSKLATGPAGAGAAT) are disordered. Positions 14–24 (ATGPAGAGAAT) are enriched in low complexity. Residues 36-277 (IEVKNLNFFY…PARKETEDYI (242 aa)) form the ABC transporter domain. ATP is bound at residue 68 to 75 (GPSGCGKS).

Belongs to the ABC transporter superfamily. Phosphate importer (TC 3.A.1.7) family. The complex is composed of two ATP-binding proteins (PstB), two transmembrane proteins (PstC and PstA) and a solute-binding protein (PstS).

The protein resides in the cell inner membrane. The enzyme catalyses phosphate(out) + ATP + H2O = ADP + 2 phosphate(in) + H(+). Its function is as follows. Part of the ABC transporter complex PstSACB involved in phosphate import. Responsible for energy coupling to the transport system. This chain is Phosphate import ATP-binding protein PstB, found in Burkholderia thailandensis (strain ATCC 700388 / DSM 13276 / CCUG 48851 / CIP 106301 / E264).